The sequence spans 101 residues: Small ribosomal subunit protein uS14m (101 aa).

Belongs to the universal ribosomal protein uS14 family. In terms of assembly, component of the mitochondrial ribosome small subunit (28S) which comprises a 12S rRNA and about 30 distinct proteins. Interacts with LIAT1.

It localises to the mitochondrion. In Dictyostelium citrinum (Slime mold), this protein is Small ribosomal subunit protein uS14m (mrps14).